The sequence spans 147 residues: Protein YjdN (147 aa).

The protein is Protein YjdN (yjdN) of Escherichia coli (strain K12).